A 527-amino-acid polypeptide reads, in one-letter code: Catalase (527 aa).

Over residues 1–22 (MADSRDPASDQMKLWKEQRAAQ) the composition is skewed to basic and acidic residues. The disordered stretch occupies residues 1-34 (MADSRDPASDQMKLWKEQRAAQKPDVLTTGGGNP). The residue at position 2 (Ala2) is an N-acetylalanine. Ser9 bears the Phosphoserine mark. Lys13 carries the N6-succinyllysine modification. Active-site residues include His75 and Asn148. NADP(+) is bound by residues His194, Ser201, Arg203, and Asn213. Position 221 is an N6-succinyllysine (Lys221). Lys233 is subject to N6-acetyllysine. Lys237, Trp303, and His305 together coordinate NADP(+). Residue Tyr358 coordinates heme. Phosphoserine occurs at positions 422 and 434. 2 positions are modified to N6-acetyllysine; alternate: Lys449 and Lys480. Residues Lys449 and Lys480 each carry the N6-succinyllysine; alternate modification. Lys499 is modified (N6-acetyllysine). Residue Thr511 is modified to Phosphothreonine. Phosphoserine is present on Ser517. The Microbody targeting signal; atypical motif lies at 524–527 (KANL).

It belongs to the catalase family. In terms of assembly, homotetramer. Interacts (via microbody targeting signal) with PEX5, monomeric form interacts with PEX5, leading to its translocation into peroxisomes. It depends on heme as a cofactor. The cofactor is NADP(+).

The protein resides in the peroxisome matrix. The catalysed reaction is 2 H2O2 = O2 + 2 H2O. Functionally, catalyzes the degradation of hydrogen peroxide (H(2)O(2)) generated by peroxisomal oxidases to water and oxygen, thereby protecting cells from the toxic effects of hydrogen peroxide. Promotes growth of cells including T-cells, B-cells, myeloid leukemia cells, melanoma cells, mastocytoma cells and normal and transformed fibroblast cells. This is Catalase (CAT) from Canis lupus familiaris (Dog).